Consider the following 188-residue polypeptide: Probable nicotinate-nucleotide adenylyltransferase (188 aa).

The protein belongs to the NadD family.

It catalyses the reaction nicotinate beta-D-ribonucleotide + ATP + H(+) = deamido-NAD(+) + diphosphate. It functions in the pathway cofactor biosynthesis; NAD(+) biosynthesis; deamido-NAD(+) from nicotinate D-ribonucleotide: step 1/1. Its function is as follows. Catalyzes the reversible adenylation of nicotinate mononucleotide (NaMN) to nicotinic acid adenine dinucleotide (NaAD). The protein is Probable nicotinate-nucleotide adenylyltransferase of Salinispora arenicola (strain CNS-205).